The chain runs to 258 residues: Imidazole glycerol phosphate synthase subunit HisF (258 aa).

Residues D11 and D130 contribute to the active site.

The protein belongs to the HisA/HisF family. As to quaternary structure, heterodimer of HisH and HisF.

It is found in the cytoplasm. It carries out the reaction 5-[(5-phospho-1-deoxy-D-ribulos-1-ylimino)methylamino]-1-(5-phospho-beta-D-ribosyl)imidazole-4-carboxamide + L-glutamine = D-erythro-1-(imidazol-4-yl)glycerol 3-phosphate + 5-amino-1-(5-phospho-beta-D-ribosyl)imidazole-4-carboxamide + L-glutamate + H(+). Its pathway is amino-acid biosynthesis; L-histidine biosynthesis; L-histidine from 5-phospho-alpha-D-ribose 1-diphosphate: step 5/9. Its function is as follows. IGPS catalyzes the conversion of PRFAR and glutamine to IGP, AICAR and glutamate. The HisF subunit catalyzes the cyclization activity that produces IGP and AICAR from PRFAR using the ammonia provided by the HisH subunit. The sequence is that of Imidazole glycerol phosphate synthase subunit HisF from Shigella boydii serotype 18 (strain CDC 3083-94 / BS512).